Reading from the N-terminus, the 433-residue chain is Enolase (433 aa).

A (2R)-2-phosphoglycerate-binding site is contributed by Gln167. Glu209 acts as the Proton donor in catalysis. Residues Asp246, Glu291, and Asp318 each coordinate Mg(2+). The (2R)-2-phosphoglycerate site is built by Lys343, Arg372, Ser373, and Lys394. Residue Lys343 is the Proton acceptor of the active site.

It belongs to the enolase family. As to quaternary structure, component of the RNA degradosome, a multiprotein complex involved in RNA processing and mRNA degradation. The cofactor is Mg(2+).

The protein resides in the cytoplasm. The protein localises to the secreted. It is found in the cell surface. It catalyses the reaction (2R)-2-phosphoglycerate = phosphoenolpyruvate + H2O. It functions in the pathway carbohydrate degradation; glycolysis; pyruvate from D-glyceraldehyde 3-phosphate: step 4/5. Catalyzes the reversible conversion of 2-phosphoglycerate (2-PG) into phosphoenolpyruvate (PEP). It is essential for the degradation of carbohydrates via glycolysis. This chain is Enolase, found in Aeromonas salmonicida (strain A449).